A 107-amino-acid chain; its full sequence is YcgL domain-containing protein Pcryo_0807 (107 aa).

A YcgL domain is found at 1 to 95 (MHCDIYKFLK…QDVMRRQAEL (95 aa)).

This chain is YcgL domain-containing protein Pcryo_0807, found in Psychrobacter cryohalolentis (strain ATCC BAA-1226 / DSM 17306 / VKM B-2378 / K5).